Reading from the N-terminus, the 189-residue chain is Ras-like protein rasG (189 aa).

Position 10 to 17 (10 to 17 (GGGGVGKS)) interacts with GTP. An Effector region motif is present at residues 32–40 (YDPTIEDSY). Residues 57–61 (DTAGQ) and 116–119 (NKCD) each bind GTP. Residues 169–189 (KGDSKPEKGKKKRPLKACTLL) form a disordered region. Residue Cys186 is modified to Cysteine methyl ester. Residue Cys186 is the site of S-geranylgeranyl cysteine attachment. Residues 187-189 (TLL) constitute a propeptide, removed in mature form.

This sequence belongs to the small GTPase superfamily. Ras family. Interacts with ripA.

It is found in the cell membrane. It catalyses the reaction GTP + H2O = GDP + phosphate + H(+). With respect to regulation, alternates between an inactive form bound to GDP and an active form bound to GTP. Activated by a guanine nucleotide-exchange factor (GEF) and inactivated by a GTPase-activating protein (GAP). Functionally, ras proteins bind GDP/GTP and possess intrinsic GTPase activity. The chain is Ras-like protein rasG (rasG) from Dictyostelium discoideum (Social amoeba).